The following is a 534-amino-acid chain: Cytochrome P450 714B1 (534 aa).

A topological domain (lumenal) is located at residue Met-1. Residues 2-22 form a helical; Signal-anchor for type III membrane protein membrane-spanning segment; it reads VVVVAAAMAAASLCCGVAAYL. Topologically, residues 23–534 are cytoplasmic; sequence YYVLWLAPER…RSKCDWAGFD (512 aa). Residue Cys-472 coordinates heme.

Belongs to the cytochrome P450 family. Heme serves as cofactor. In terms of tissue distribution, highly expressed in spikelet and uppermost internode. Detected in shoots, roots, leaves and anthers.

Its subcellular location is the membrane. In terms of biological role, catalyzes the 13-hydroxylation of gibberellins (GAs). Determines the ratio of GA4 and GA1. Converts GA12 into GA53. This chain is Cytochrome P450 714B1 (CYP714B1), found in Oryza sativa subsp. japonica (Rice).